Here is a 61-residue protein sequence, read N- to C-terminus: MAKKSLKVKQAKHQKFNVRNYTRCNHCGRPHAVLKKFGICRLCFRKFAYEGQIPGIKKASW.

Zn(2+)-binding residues include cysteine 24, cysteine 27, cysteine 40, and cysteine 43.

The protein belongs to the universal ribosomal protein uS14 family. Zinc-binding uS14 subfamily. As to quaternary structure, part of the 30S ribosomal subunit. Contacts proteins S3 and S10. The cofactor is Zn(2+).

Functionally, binds 16S rRNA, required for the assembly of 30S particles and may also be responsible for determining the conformation of the 16S rRNA at the A site. The chain is Small ribosomal subunit protein uS14 from Mycoplasma capricolum subsp. capricolum (strain California kid / ATCC 27343 / NCTC 10154).